Consider the following 483-residue polypeptide: Cobyric acid synthase (483 aa).

The GATase cobBQ-type domain maps to 248–435 (VLKVVVPVLP…LHGLFETAAA (188 aa)). Catalysis depends on cysteine 329, which acts as the Nucleophile. Residue histidine 427 is part of the active site.

Belongs to the CobB/CobQ family. CobQ subfamily.

It functions in the pathway cofactor biosynthesis; adenosylcobalamin biosynthesis. Its function is as follows. Catalyzes amidations at positions B, D, E, and G on adenosylcobyrinic A,C-diamide. NH(2) groups are provided by glutamine, and one molecule of ATP is hydrogenolyzed for each amidation. The protein is Cobyric acid synthase of Pseudomonas fluorescens (strain SBW25).